The following is a 495-amino-acid chain: Probable cytochrome P450 4s3 (495 aa).

E307 and C436 together coordinate heme.

It belongs to the cytochrome P450 family. It depends on heme as a cofactor.

Its subcellular location is the endoplasmic reticulum membrane. It is found in the microsome membrane. In terms of biological role, may be involved in the metabolism of insect hormones and in the breakdown of synthetic insecticides. The polypeptide is Probable cytochrome P450 4s3 (Cyp4s3) (Drosophila melanogaster (Fruit fly)).